The chain runs to 745 residues: Ankyrin repeat and protein kinase domain-containing protein 1 (745 aa).

Residues glutamate 34–leucine 301 enclose the Protein kinase domain. ATP contacts are provided by residues valine 40–valine 48 and lysine 63. The Proton acceptor role is filled by aspartate 157. 11 ANK repeats span residues asparagine 369–cysteine 398, serine 402–leucine 431, aspartate 435–alanine 464, glutamate 468–proline 497, glutamate 501–alanine 530, asparagine 534–alanine 563, serine 567–leucine 596, glutamine 600–alanine 629, methionine 633–alanine 662, serine 666–alanine 695, and valine 699–valine 728.

Belongs to the protein kinase superfamily. TKL Ser/Thr protein kinase family.

It catalyses the reaction L-seryl-[protein] + ATP = O-phospho-L-seryl-[protein] + ADP + H(+). The catalysed reaction is L-threonyl-[protein] + ATP = O-phospho-L-threonyl-[protein] + ADP + H(+). This is Ankyrin repeat and protein kinase domain-containing protein 1 (Ankk1) from Mus musculus (Mouse).